An 82-amino-acid polypeptide reads, in one-letter code: MVRIRLARGGCKKSPFYYIVVTDSRNSRDGRFIERIGFFNPVELDIKKRLRVNLDRVRYWLSNGAQPSDRVFVLIKWSKNVY.

The protein belongs to the bacterial ribosomal protein bS16 family.

This is Small ribosomal subunit protein bS16 from Blochmanniella floridana.